A 229-amino-acid chain; its full sequence is Germin-like protein 12-1 (229 aa).

A signal peptide spans 1-22 (MASSNFFLPTALIALVATQAMA). Residues Cys32 and Cys47 are joined by a disulfide bond. The 156-residue stretch at 62-217 (ANLDKPMDTT…AFQVDKKAVD (156 aa)) folds into the Cupin type-1 domain. An N-linked (GlcNAc...) asparagine glycan is attached at Asn78. Mn(2+) contacts are provided by His111, His113, Glu118, and His162.

This sequence belongs to the germin family. Oligomer (believed to be a pentamer but probably hexamer).

The protein resides in the secreted. It is found in the extracellular space. The protein localises to the apoplast. Its function is as follows. May play a role in plant defense. Probably has no oxalate oxidase activity even if the active site is conserved. In Oryza sativa subsp. japonica (Rice), this protein is Germin-like protein 12-1.